Here is a 152-residue protein sequence, read N- to C-terminus: Xanthine-guanine phosphoribosyltransferase (152 aa).

5-phospho-alpha-D-ribose 1-diphosphate-binding positions include 37–38 (RG), Arg-69, and 88–96 (DDLVDTGGT). Arg-69 is a GMP binding site. Mg(2+) is bound at residue Asp-89. Residues Asp-92 and Ile-135 each contribute to the guanine site. 2 residues coordinate xanthine: Asp-92 and Ile-135. GMP contacts are provided by residues 92–96 (DTGGT) and 134–135 (WI).

This sequence belongs to the purine/pyrimidine phosphoribosyltransferase family. XGPT subfamily. In terms of assembly, homotetramer. Mg(2+) is required as a cofactor.

It is found in the cell inner membrane. It carries out the reaction GMP + diphosphate = guanine + 5-phospho-alpha-D-ribose 1-diphosphate. The catalysed reaction is XMP + diphosphate = xanthine + 5-phospho-alpha-D-ribose 1-diphosphate. The enzyme catalyses IMP + diphosphate = hypoxanthine + 5-phospho-alpha-D-ribose 1-diphosphate. It functions in the pathway purine metabolism; GMP biosynthesis via salvage pathway; GMP from guanine: step 1/1. The protein operates within purine metabolism; XMP biosynthesis via salvage pathway; XMP from xanthine: step 1/1. Its function is as follows. Purine salvage pathway enzyme that catalyzes the transfer of the ribosyl-5-phosphate group from 5-phospho-alpha-D-ribose 1-diphosphate (PRPP) to the N9 position of the 6-oxopurines guanine and xanthine to form the corresponding ribonucleotides GMP (guanosine 5'-monophosphate) and XMP (xanthosine 5'-monophosphate), with the release of PPi. To a lesser extent, also acts on hypoxanthine. This Enterobacter sp. (strain 638) protein is Xanthine-guanine phosphoribosyltransferase.